Here is a 350-residue protein sequence, read N- to C-terminus: Phosphotriesterase-related protein (350 aa).

6 residues coordinate a divalent metal cation: histidine 22, histidine 24, glutamate 169, histidine 201, histidine 230, and aspartate 298.

It belongs to the metallo-dependent hydrolases superfamily. Phosphotriesterase family. Requires a divalent metal cation as cofactor.

This chain is Phosphotriesterase-related protein, found in Drosophila melanogaster (Fruit fly).